Here is a 244-residue protein sequence, read N- to C-terminus: THO complex subunit 4A (244 aa).

The segment at 1-82 (MSTGLDMSLD…EDHRSGRSSA (82 aa)) is disordered. Ser-2 bears the N-acetylserine mark. Gly residues predominate over residues 21-35 (GGAGPARGTGSGSGP). Residues 67–77 (MFSDRSEDHRS) are compositionally biased toward basic and acidic residues. Positions 88-165 (TKLYISNLDY…KPMKIEIVGT (78 aa)) constitute an RRM domain. Residues 169-244 (TAAAPSGRPA…KYHSGDMETN (76 aa)) form a disordered region. Positions 187–211 (WRGGQGRGGQQRGGGRGGGGRGGGG) are enriched in gly residues. The segment covering 220–244 (PAEKISAEDLDADLDKYHSGDMETN) has biased composition (basic and acidic residues).

This sequence belongs to the ALYREF family.

Its subcellular location is the nucleus. The protein localises to the nucleoplasm. The protein resides in the nucleolus. Export adapter involved in nuclear export of spliced and unspliced mRNA. This Arabidopsis thaliana (Mouse-ear cress) protein is THO complex subunit 4A (ALY1).